Reading from the N-terminus, the 137-residue chain is Large-conductance mechanosensitive channel (137 aa).

Transmembrane regions (helical) follow at residues 10–30 (FAMR…AAFG) and 76–96 (GVFI…FMAI).

It belongs to the MscL family. In terms of assembly, homopentamer.

It localises to the cell inner membrane. Functionally, channel that opens in response to stretch forces in the membrane lipid bilayer. May participate in the regulation of osmotic pressure changes within the cell. This is Large-conductance mechanosensitive channel from Enterobacter sp. (strain 638).